A 118-amino-acid polypeptide reads, in one-letter code: Ribonuclease P protein component (118 aa).

It belongs to the RnpA family. Consists of a catalytic RNA component (M1 or rnpB) and a protein subunit.

It catalyses the reaction Endonucleolytic cleavage of RNA, removing 5'-extranucleotides from tRNA precursor.. In terms of biological role, RNaseP catalyzes the removal of the 5'-leader sequence from pre-tRNA to produce the mature 5'-terminus. It can also cleave other RNA substrates such as 4.5S RNA. The protein component plays an auxiliary but essential role in vivo by binding to the 5'-leader sequence and broadening the substrate specificity of the ribozyme. This chain is Ribonuclease P protein component, found in Rickettsia canadensis (strain McKiel).